Consider the following 316-residue polypeptide: tRNA dimethylallyltransferase (316 aa).

27–34 (GATATGKT) lines the ATP pocket. Position 29–34 (29–34 (TATGKT)) interacts with substrate. The interval 52–55 (DSRQ) is interaction with substrate tRNA.

It belongs to the IPP transferase family. As to quaternary structure, monomer. It depends on Mg(2+) as a cofactor.

It carries out the reaction adenosine(37) in tRNA + dimethylallyl diphosphate = N(6)-dimethylallyladenosine(37) in tRNA + diphosphate. In terms of biological role, catalyzes the transfer of a dimethylallyl group onto the adenine at position 37 in tRNAs that read codons beginning with uridine, leading to the formation of N6-(dimethylallyl)adenosine (i(6)A). The chain is tRNA dimethylallyltransferase from Treponema pallidum (strain Nichols).